A 257-amino-acid chain; its full sequence is Pyridoxine 5'-phosphate synthase (257 aa).

A 3-amino-2-oxopropyl phosphate-binding site is contributed by Asn6. 8–9 (DH) serves as a coordination point for 1-deoxy-D-xylulose 5-phosphate. Arg17 is a binding site for 3-amino-2-oxopropyl phosphate. His42 serves as the catalytic Proton acceptor. Residues Arg44 and His49 each coordinate 1-deoxy-D-xylulose 5-phosphate. The Proton acceptor role is filled by Glu69. Thr99 lines the 1-deoxy-D-xylulose 5-phosphate pocket. His211 serves as the catalytic Proton donor. Residues Gly212 and 233 to 234 (GQ) each bind 3-amino-2-oxopropyl phosphate.

This sequence belongs to the PNP synthase family. As to quaternary structure, homooctamer; tetramer of dimers.

The protein localises to the cytoplasm. It carries out the reaction 3-amino-2-oxopropyl phosphate + 1-deoxy-D-xylulose 5-phosphate = pyridoxine 5'-phosphate + phosphate + 2 H2O + H(+). It participates in cofactor biosynthesis; pyridoxine 5'-phosphate biosynthesis; pyridoxine 5'-phosphate from D-erythrose 4-phosphate: step 5/5. Its function is as follows. Catalyzes the complicated ring closure reaction between the two acyclic compounds 1-deoxy-D-xylulose-5-phosphate (DXP) and 3-amino-2-oxopropyl phosphate (1-amino-acetone-3-phosphate or AAP) to form pyridoxine 5'-phosphate (PNP) and inorganic phosphate. In Campylobacter hominis (strain ATCC BAA-381 / DSM 21671 / CCUG 45161 / LMG 19568 / NCTC 13146 / CH001A), this protein is Pyridoxine 5'-phosphate synthase.